The following is a 194-amino-acid chain: Fibroblast growth factor 7 (194 aa).

A signal peptide spans 1–31 (MRKWILTWILPSLLYRSCFHIICLVGTISLA). The N-linked (GlcNAc...) asparagine glycan is linked to Asn-45.

Belongs to the heparin-binding growth factors family. As to quaternary structure, interacts with FGFBP1. Interacts with FGFR2. Affinity between fibroblast growth factors (FGFs) and their receptors is increased by heparan sulfate glycosaminoglycans that function as coreceptors.

It localises to the secreted. In terms of biological role, plays an important role in the regulation of embryonic development, cell proliferation and cell differentiation. Required for normal branching morphogenesis. Growth factor active on keratinocytes. Possible major paracrine effector of normal epithelial cell proliferation. This chain is Fibroblast growth factor 7 (FGF7), found in Cervus elaphus (Red deer).